The chain runs to 622 residues: Probable ATP-dependent RNA helicase DDX41 (622 aa).

Residues 1 to 15 (MEESEPERKRARTDE) are compositionally biased toward basic and acidic residues. Disordered regions lie at residues 1–39 (MEESEPERKRARTDEVPAGGSRSEAEDEDDEDYVPYVPL) and 52–84 (QRRRKGAAEEEQQDSGSEPRGDEDDIPLGPQSN). Ser-4 bears the Phosphoserine mark. Lys-9 carries the N6-acetyllysine modification. Lys-9 is covalently cross-linked (Glycyl lysine isopeptide (Lys-Gly) (interchain with G-Cter in ubiquitin)). Phosphoserine occurs at positions 21 and 23. Tyr-33 carries the post-translational modification Phosphotyrosine. A Glycyl lysine isopeptide (Lys-Gly) (interchain with G-Cter in ubiquitin) cross-link involves residue Lys-115. Positions 181 to 209 (KSFKEMKFPAAILRGLKKKGIHHPTPIQI) match the Q motif motif. Residues 212–396 (IPTILSGRDM…KSALVKPVTI (185 aa)) enclose the Helicase ATP-binding domain. Position 225 to 232 (225 to 232 (AFTGSGKT)) interacts with ATP. The DEAD box signature appears at 344–347 (DEAD). The region spanning 407–567 (DVIQEVEYVK…KVPPVLQVLH (161 aa)) is the Helicase C-terminal domain. Tyr-414 is modified (phosphotyrosine; by BTK). Residues Lys-416 and Lys-442 each participate in a glycyl lysine isopeptide (Lys-Gly) (interchain with G-Cter in SUMO2) cross-link. Residues 580-597 (RGCAFCGGLGHRITDCPK) form a CCHC-type zinc finger.

This sequence belongs to the DEAD box helicase family. DDX41 subfamily. As to quaternary structure, identified in the spliceosome C complex. Interacts with ERCC6. Interacts with FAM50A. Interacts with STING1. Interacts with CGAS. Interacts with several spliceosomes components such as PRP19 or CDC5L. Post-translationally, acetylation at Lys-9 regulates the nuclear/cytoplasmic localization. In terms of processing, phosphorylated by BTK; phosphorylation induces binding to dsDNA and STING1. 'Lys-48'-linked ubiquitinated and degraded by TRIM21 leading to negative regulation of the innate immune response to intracellular dsDNA.

It localises to the nucleus. The protein localises to the cytoplasm. It carries out the reaction ATP + H2O = ADP + phosphate + H(+). Its function is as follows. Multifunctional protein that participates in many aspects of cellular RNA metabolism. Plays pivotal roles in innate immune sensing and hematopoietic homeostasis. Recognizes foreign or self-nucleic acids generated during microbial infection, thereby initiating anti-pathogen responses. Mechanistically, phosphorylation by BTK allows binding to dsDNA leading to interaction with STING1. Modulates the homeostasis of dsDNA through its ATP-dependent DNA-unwinding activity and ATP-independent strand-annealing activity. In turn, induces STING1-mediated type I interferon and cytokine responses to DNA and DNA viruses. Selectively modulates the transcription of certain immunity-associated genes by regulating their alternative splicing. Binds to RNA (R)-loops, structures consisting of DNA/RNA hybrids and a displaced strand of DNA that occur during transcription, and prevents their accumulation, thereby maintaining genome stability. Also participates in pre-mRNA splicing, translational regulation and snoRNA processing, which is essential for ribosome biogenesis. The polypeptide is Probable ATP-dependent RNA helicase DDX41 (DDX41) (Homo sapiens (Human)).